The primary structure comprises 761 residues: Zinc finger protein 711 (761 aa).

Residues Lys224, Lys235, and Lys296 each participate in a glycyl lysine isopeptide (Lys-Gly) (interchain with G-Cter in SUMO2) cross-link. C2H2-type zinc fingers lie at residues 383–408 (YPCH…HPDH), 414–436 (YQCT…LESH), 476–499 (HKCK…LAVH), 505–527 (HVCV…MRTH), and 533–556 (YQCQ…KSKH). Positions 515–761 (RHPSELKKHM…IMRHHKEALM (247 aa)) are required for transcriptional activation. Residues 562–584 (YKCEHCPQAFGDERELQRHLDLF) form a C2H2-type 6; atypical zinc finger. Residues Cys564, Cys567, and His580 each coordinate Zn(2+). 6 C2H2-type zinc fingers span residues 590–613 (HQCP…ISVH), 619–641 (HKCE…SDIH), 647–670 (HQCR…LSVH), 676–698 (LKCK…MKTH), 704–727 (YQCE…ISIH), and 733–755 (HRCE…IMRH).

Belongs to the krueppel C2H2-type zinc-finger protein family. In terms of assembly, interacts with PHF8. Expressed in neural tissues.

It localises to the nucleus. Transcription regulator required for brain development. Probably acts as a transcription factor that binds to the promoter of target genes and recruits PHF8 histone demethylase, leading to activated expression of genes involved in neuron development, such as KDM5C. May compete with transcription factor ARX for activation of expression of KDM5C. This Homo sapiens (Human) protein is Zinc finger protein 711 (ZNF711).